We begin with the raw amino-acid sequence, 661 residues long: WD repeat-containing protein 26 (661 aa).

A compositionally biased stretch (gly residues) spans 1-27 (MQANGAGGGGGGGGGGGGGGGGGGGQG). 2 disordered regions span residues 1-70 (MQAN…ASNN) and 99-118 (TAAS…KKKK). 2 stretches are compositionally biased toward low complexity: residues 56–70 (ANGL…ASNN) and 99–113 (TAAS…LGSS). A phosphoserine mark is found at serine 121 and serine 123. The LisH domain maps to 123–155 (SDEDVIRLIGQHLNGLGLNQTVDLLMQESGCRL). The CTLH domain occupies 156–231 (EHPSATKFRN…EYLEDGKVLE (76 aa)). 6 WD repeats span residues 353–392 (EHCN…HLLK), 399–438 (GHAY…GELR), 444–484 (SHED…DSWE), 524–563 (QEDH…LVRK), 566–608 (GVTQ…PIAE), and 611–651 (GHTR…DHQN).

In terms of assembly, forms homooligomers. Identified in the CTLH complex that contains GID4, RANBP9 and/or RANBP10, MKLN1, MAEA, RMND5A (or alternatively its paralog RMND5B), GID8, ARMC8, WDR26 and YPEL5. Within this complex, MAEA, RMND5A (or alternatively its paralog RMND5B), GID8, WDR26, and RANBP9 and/or RANBP10 form the catalytic core, while GID4, MKLN1, ARMC8 and YPEL5 have ancillary roles. Interacts with DDB1-CUL4A/B E3 ligase complexes. Forms a complex composed of at least WDR26, a G-beta:gamma unit, and PLCB2. Interacts with AXIN1. Broadly expressed, with highest levels in heart and skeletal muscle.

Its subcellular location is the cytoplasm. The protein localises to the nucleus. The protein resides in the mitochondrion. Its function is as follows. G-beta-like protein involved in cell signal transduction. Acts as a negative regulator in MAPK signaling pathway. Functions as a scaffolding protein to promote G beta:gamma-mediated PLCB2 plasma membrane translocation and subsequent activation in leukocytes. Core component of the CTLH E3 ubiquitin-protein ligase complex that selectively accepts ubiquitin from UBE2H and mediates ubiquitination and subsequent proteasomal degradation of the transcription factor HBP1. Acts as a negative regulator of the canonical Wnt signaling pathway through preventing ubiquitination of beta-catenin CTNNB1 by the beta-catenin destruction complex, thus negatively regulating CTNNB1 degradation. Serves as a scaffold to coordinate PI3K/AKT pathway-driven cell growth and migration. Protects cells from oxidative stress-induced apoptosis via the down-regulation of AP-1 transcriptional activity as well as by inhibiting cytochrome c release from mitochondria. Also protects cells by promoting hypoxia-mediated autophagy and mitophagy. The polypeptide is WD repeat-containing protein 26 (WDR26) (Homo sapiens (Human)).